Reading from the N-terminus, the 298-residue chain is ATP synthase F(1) complex subunit gamma, mitochondrial (298 aa).

The N-terminal 25 residues, 1-25, are a transit peptide targeting the mitochondrion; sequence MFSRAGVAGLSAWTLQPQWIQVRNM. N6-acetyllysine is present on K39. K49 is modified (N6-succinyllysine). K55 is modified (N6-acetyllysine). Position 115 is an N6-acetyllysine; alternate (K115). K115 bears the N6-succinyllysine; alternate mark. Position 146 is a phosphoserine (S146). An N6-acetyllysine; alternate modification is found at K154. K154 bears the N6-succinyllysine; alternate mark. An N6-acetyllysine modification is found at K197. K270 is subject to N6-succinyllysine.

This sequence belongs to the ATPase gamma chain family. Component of the ATP synthase complex composed at least of ATP5F1A/subunit alpha, ATP5F1B/subunit beta, ATP5MC1/subunit c (homooctomer), MT-ATP6/subunit a, MT-ATP8/subunit 8, ATP5ME/subunit e, ATP5MF/subunit f, ATP5MG/subunit g, ATP5MK/subunit k, ATP5MJ/subunit j, ATP5F1C/subunit gamma, ATP5F1D/subunit delta, ATP5F1E/subunit epsilon, ATP5PF/subunit F6, ATP5PB/subunit b, ATP5PD/subunit d, ATP5PO/subunit OSCP. ATP synthase complex consists of a soluble F(1) head domain (subunits alpha(3) and beta(3)) - the catalytic core - and a membrane F(0) domain - the membrane proton channel (subunits c, a, 8, e, f, g, k and j). These two domains are linked by a central stalk (subunits gamma, delta, and epsilon) rotating inside the F1 region and a stationary peripheral stalk (subunits F6, b, d, and OSCP). Interacts with FLVCR2; this interaction occurs in the absence of heme and is disrupted upon heme binding.

The protein localises to the mitochondrion inner membrane. Subunit gamma, of the mitochondrial membrane ATP synthase complex (F(1)F(0) ATP synthase or Complex V) that produces ATP from ADP in the presence of a proton gradient across the membrane which is generated by electron transport complexes of the respiratory chain. ATP synthase complex consist of a soluble F(1) head domain - the catalytic core - and a membrane F(1) domain - the membrane proton channel. These two domains are linked by a central stalk rotating inside the F(1) region and a stationary peripheral stalk. During catalysis, ATP synthesis in the catalytic domain of F(1) is coupled via a rotary mechanism of the central stalk subunits to proton translocation. In vivo, can only synthesize ATP although its ATP hydrolase activity can be activated artificially in vitro. With the central stalk subunit delta, is essential for the biogenesis of F(1) catalytic part of the ATP synthase complex namely in the formation of F1 assembly intermediate. The polypeptide is ATP synthase F(1) complex subunit gamma, mitochondrial (Macaca fascicularis (Crab-eating macaque)).